Reading from the N-terminus, the 224-residue chain is Cytidylate kinase (224 aa).

11–19 (GPAAAGKST) contacts ATP.

The protein belongs to the cytidylate kinase family. Type 1 subfamily.

It is found in the cytoplasm. The catalysed reaction is CMP + ATP = CDP + ADP. It carries out the reaction dCMP + ATP = dCDP + ADP. This is Cytidylate kinase from Listeria monocytogenes serotype 4a (strain HCC23).